We begin with the raw amino-acid sequence, 475 residues long: MHFETVIGLEVHVELKTDSKMFSPSPAHFGAEPNSNTNVIDLAYPGVLPVVNKRAVDWAMRAAMALNMEIATESKFDRKNYFYPDNPKAYQISQFDQPIGENGYIDIEVDGETKRIGITRLHMEEDAGKSTHKGEYSLVDLNRQGTPLIEIVSEPDIRSPKEAYAYLEKLRSIIQYTGVSDVKMEEGSLRCDANISLRPYGQEKFGTKAELKNLNSFNYVRKGLEYEEKRQEEELLNGGEIGQETRRFDESTGKTILMRVKEGSDDYRYFPEPDIVPLYIDDAWKERVRQTIPELPDERKAKYVNELGLPAYDAHVLTLTKEMSDFFESTIEHGADVKLTSNWLMGGVNEYLNKNQVELLDTKLTPENLAGMIKLIEDGTMSSKIAKKVFPELAAKGGNAKQIMEDNGLVQISDEATLLKFVNEALDNNEQSVEDYKNGKGKAMGFLVGQIMKASKGQANPQLVNQLLKQELDKR.

The protein belongs to the GatB/GatE family. GatB subfamily. As to quaternary structure, heterotrimer of A, B and C subunits.

It carries out the reaction L-glutamyl-tRNA(Gln) + L-glutamine + ATP + H2O = L-glutaminyl-tRNA(Gln) + L-glutamate + ADP + phosphate + H(+). It catalyses the reaction L-aspartyl-tRNA(Asn) + L-glutamine + ATP + H2O = L-asparaginyl-tRNA(Asn) + L-glutamate + ADP + phosphate + 2 H(+). In terms of biological role, allows the formation of correctly charged Asn-tRNA(Asn) or Gln-tRNA(Gln) through the transamidation of misacylated Asp-tRNA(Asn) or Glu-tRNA(Gln) in organisms which lack either or both of asparaginyl-tRNA or glutaminyl-tRNA synthetases. The reaction takes place in the presence of glutamine and ATP through an activated phospho-Asp-tRNA(Asn) or phospho-Glu-tRNA(Gln). The chain is Aspartyl/glutamyl-tRNA(Asn/Gln) amidotransferase subunit B from Staphylococcus aureus (strain COL).